Consider the following 274-residue polypeptide: Ribosomal RNA small subunit methyltransferase A (274 aa).

S-adenosyl-L-methionine is bound by residues His15, Leu17, Gly42, Glu64, Asp89, and Asn108.

The protein belongs to the class I-like SAM-binding methyltransferase superfamily. rRNA adenine N(6)-methyltransferase family. RsmA subfamily.

The protein resides in the cytoplasm. The enzyme catalyses adenosine(1518)/adenosine(1519) in 16S rRNA + 4 S-adenosyl-L-methionine = N(6)-dimethyladenosine(1518)/N(6)-dimethyladenosine(1519) in 16S rRNA + 4 S-adenosyl-L-homocysteine + 4 H(+). In terms of biological role, specifically dimethylates two adjacent adenosines (A1518 and A1519) in the loop of a conserved hairpin near the 3'-end of 16S rRNA in the 30S particle. May play a critical role in biogenesis of 30S subunits. The sequence is that of Ribosomal RNA small subunit methyltransferase A from Prochlorococcus marinus (strain AS9601).